Consider the following 265-residue polypeptide: Shikimate dehydrogenase (NADP(+)) (265 aa).

Shikimate is bound by residues S15–S17 and T62. Catalysis depends on K66, which acts as the Proton acceptor. Residues N87 and D102 each contribute to the shikimate site. Residues G125–A129, N149–K154, and L209 each bind NADP(+). Y211 contributes to the shikimate binding site. G233 lines the NADP(+) pocket.

Belongs to the shikimate dehydrogenase family. Homodimer.

The catalysed reaction is shikimate + NADP(+) = 3-dehydroshikimate + NADPH + H(+). The protein operates within metabolic intermediate biosynthesis; chorismate biosynthesis; chorismate from D-erythrose 4-phosphate and phosphoenolpyruvate: step 4/7. Functionally, involved in the biosynthesis of the chorismate, which leads to the biosynthesis of aromatic amino acids. Catalyzes the reversible NADPH linked reduction of 3-dehydroshikimate (DHSA) to yield shikimate (SA). This Legionella pneumophila subsp. pneumophila (strain Philadelphia 1 / ATCC 33152 / DSM 7513) protein is Shikimate dehydrogenase (NADP(+)).